A 356-amino-acid chain; its full sequence is SERTA domain-containing protein 4 (356 aa).

A disordered region spans residues 33-53 (SYGGPSPPGPAQAPLQGDRGA). The region spanning 101–147 (IFEERAHILYMSLEKLKFIDDPEVYLRRSVLINNLMKRIHGEIIMQN) is the SERTA domain. Over residues 215-232 (TAASSPSASSSSSSSSSS) the composition is skewed to low complexity. Disordered stretches follow at residues 215-238 (TAAS…LPLP), 280-302 (KLND…HEPV), and 332-356 (WKKS…GSKI). The segment covering 280 to 292 (KLNDEKANDDTNR) has biased composition (basic and acidic residues).

The sequence is that of SERTA domain-containing protein 4 (SERTAD4) from Homo sapiens (Human).